The following is a 139-amino-acid chain: uncharacterized protein (139 aa).

This is an uncharacterized protein from Dictyostelium discoideum (Social amoeba).